A 141-amino-acid polypeptide reads, in one-letter code: Nucleoside diphosphate kinase (141 aa).

6 residues coordinate ATP: Lys11, Tyr59, Arg87, Thr93, Arg104, and Asn114. The active-site Pros-phosphohistidine intermediate is the His117.

Belongs to the NDK family. Homotetramer. Requires Mg(2+) as cofactor.

It localises to the cytoplasm. The catalysed reaction is a 2'-deoxyribonucleoside 5'-diphosphate + ATP = a 2'-deoxyribonucleoside 5'-triphosphate + ADP. It catalyses the reaction a ribonucleoside 5'-diphosphate + ATP = a ribonucleoside 5'-triphosphate + ADP. Functionally, major role in the synthesis of nucleoside triphosphates other than ATP. The ATP gamma phosphate is transferred to the NDP beta phosphate via a ping-pong mechanism, using a phosphorylated active-site intermediate. This is Nucleoside diphosphate kinase from Orientia tsutsugamushi (strain Boryong) (Rickettsia tsutsugamushi).